The chain runs to 407 residues: uncharacterized protein (407 aa).

3 disordered regions span residues 1–64 (MSRK…EPFD), 110–276 (GFGP…YPQF), and 314–341 (QSRP…HNNP). Positions 7-32 (KQSNPKRNYKNDNYFQENSYTMTNGF) are enriched in polar residues. The span at 33 to 44 (TKDKDGKPVEFK) shows a compositional bias: basic and acidic residues. Residues 122-137 (DSDSEYSDECLTDECS) are compositionally biased toward acidic residues. Composition is skewed to polar residues over residues 138–147 (DNYNKQSTDS) and 184–201 (NFDN…NSQP). A compositionally biased stretch (low complexity) spans 209–231 (SKSSSKSSKSNKSNKSSKSNKSS). The segment covering 232–246 (KSSKSKSNKHSKHKN) has biased composition (basic residues). Residues 247 to 258 (KSDSSSDSDEKT) show a composition bias toward basic and acidic residues. 2 stretches are compositionally biased toward basic residues: residues 259–270 (HKHKDRRHRRGR) and 316–341 (RPRK…HNNP).

This is an uncharacterized protein from Acanthamoeba polyphaga mimivirus (APMV).